A 62-amino-acid polypeptide reads, in one-letter code: uncharacterized protein (62 aa).

The helical transmembrane segment at 15-37 threads the bilayer; it reads FSSGVLISNFLLFNFIIISHSSL. Residues 41 to 56 are compositionally biased toward low complexity; it reads TTTTTTTTTTTTNTKS. The tract at residues 41-62 is disordered; sequence TTTTTTTTTTTTNTKSTLHRSG.

Its subcellular location is the membrane. This is an uncharacterized protein from Dictyostelium discoideum (Social amoeba).